Here is a 128-residue protein sequence, read N- to C-terminus: DNA-directed RNA polymerase subunit omega (128 aa).

This sequence belongs to the RNA polymerase subunit omega family. As to quaternary structure, the RNAP catalytic core consists of 2 alpha, 1 beta, 1 beta' and 1 omega subunit. When a sigma factor is associated with the core the holoenzyme is formed, which can initiate transcription.

The enzyme catalyses RNA(n) + a ribonucleoside 5'-triphosphate = RNA(n+1) + diphosphate. Its function is as follows. Promotes RNA polymerase assembly. Latches the N- and C-terminal regions of the beta' subunit thereby facilitating its interaction with the beta and alpha subunits. The chain is DNA-directed RNA polymerase subunit omega from Neorickettsia sennetsu (strain ATCC VR-367 / Miyayama) (Ehrlichia sennetsu).